A 269-amino-acid chain; its full sequence is 4-hydroxy-tetrahydrodipicolinate reductase (269 aa).

Residues 13–18 and Asp39 each bind NAD(+); that span reads GASGRM. Arg40 contacts NADP(+). NAD(+)-binding positions include 101 to 103 and 125 to 128; these read GTT and APNM. His158 acts as the Proton donor/acceptor in catalysis. Position 159 (His159) interacts with (S)-2,3,4,5-tetrahydrodipicolinate. Lys162 (proton donor) is an active-site residue. 168–169 contributes to the (S)-2,3,4,5-tetrahydrodipicolinate binding site; that stretch reads GT.

The protein belongs to the DapB family.

It localises to the cytoplasm. The catalysed reaction is (S)-2,3,4,5-tetrahydrodipicolinate + NAD(+) + H2O = (2S,4S)-4-hydroxy-2,3,4,5-tetrahydrodipicolinate + NADH + H(+). It catalyses the reaction (S)-2,3,4,5-tetrahydrodipicolinate + NADP(+) + H2O = (2S,4S)-4-hydroxy-2,3,4,5-tetrahydrodipicolinate + NADPH + H(+). It functions in the pathway amino-acid biosynthesis; L-lysine biosynthesis via DAP pathway; (S)-tetrahydrodipicolinate from L-aspartate: step 4/4. Catalyzes the conversion of 4-hydroxy-tetrahydrodipicolinate (HTPA) to tetrahydrodipicolinate. The protein is 4-hydroxy-tetrahydrodipicolinate reductase of Bordetella pertussis (strain Tohama I / ATCC BAA-589 / NCTC 13251).